A 407-amino-acid polypeptide reads, in one-letter code: Membrane protein MosC (407 aa).

The interval 1 to 24 (MTRTSPRHHAPSETKRRVPMGGVH) is disordered. The next 11 helical transmembrane spans lie at 31–51 (LTIT…AAWA), 69–89 (GVLL…AGYF), 109–129 (ALVL…IVLF), 157–177 (AFLH…FGVI), 186–206 (SVTL…HLLD), 225–245 (LLMF…IAEW), 255–275 (QVTD…MIAG), 290–310 (ALIA…LFMP), 316–336 (LAGF…IFSE), 347–367 (VGLT…PPII), and 377–397 (GRAL…SVFF).

The protein localises to the cell membrane. Its function is as follows. May be a membrane transport protein that could either transport a precursor for rhizopine biosynthesis into bacteroids or the finished product from the bacteroids. This chain is Membrane protein MosC (mosC), found in Rhizobium meliloti (Ensifer meliloti).